The primary structure comprises 409 residues: Arginine deiminase (409 aa).

The active-site Amidino-cysteine intermediate is the Cys399.

The protein belongs to the arginine deiminase family.

Its subcellular location is the cytoplasm. It catalyses the reaction L-arginine + H2O = L-citrulline + NH4(+). It functions in the pathway amino-acid degradation; L-arginine degradation via ADI pathway; carbamoyl phosphate from L-arginine: step 1/2. This Streptococcus pneumoniae serotype 19F (strain G54) protein is Arginine deiminase.